The sequence spans 260 residues: Thrombin-like enzyme bhalternin (260 aa).

An N-terminal signal peptide occupies residues 1–18 (MVLIRVLANLLILQLSYA). The propeptide occupies 19 to 24 (QKASEL). One can recognise a Peptidase S1 domain in the interval 25-251 (VIGGDECNIN…YSEWIQSIIA (227 aa)). 5 disulfides stabilise this stretch: Cys-31–Cys-165, Cys-50–Cys-66, Cys-144–Cys-212, Cys-176–Cys-191, and Cys-202–Cys-227. Asn-44 carries N-linked (GlcNAc...) asparagine glycosylation. Asn-81 carries an N-linked (GlcNAc...) asparagine glycan.

Belongs to the peptidase S1 family. Snake venom subfamily. In terms of assembly, monomer. In terms of tissue distribution, expressed by the venom gland.

The protein resides in the secreted. With respect to regulation, inhibited by benzamidine and partially inhibited by EDTA. Thrombin-like snake venom serine protease that induces blood clotting in vitro, defibrinogenation in vivo (by intraperitoneal injection into mice), albuminolytic and fibrinogenolytic activities. Preferentially cleaves the alpha chain of fibrinogen (FGA). Causes hemolysis in the heart, causes apparent hyperemia and lymphocytic interstitial pneumonitis in the lung, causes necrosis and inflammatory infiltrate in the liver, and causes glomerular congestion in the kidney. Also provokes a drastic myonecrosis. This is Thrombin-like enzyme bhalternin from Bothrops alternatus (Urutu).